The primary structure comprises 464 residues: Probable acid phosphatase DDB_G0284753 (464 aa).

The disordered stretch occupies residues 1–29; sequence MFSYFRKSQQKVEENQNGGGGDGRGSGIK. Positions 17–26 are enriched in gly residues; the sequence is NGGGGDGRGS. The active-site Nucleophile is the histidine 81. The interval 180–202 is disordered; it reads SFTDEQEKSPHHSSFLVKPDNEE. The Proton donor role is filled by aspartate 347.

The protein belongs to the histidine acid phosphatase family.

The catalysed reaction is a phosphate monoester + H2O = an alcohol + phosphate. The polypeptide is Probable acid phosphatase DDB_G0284753 (Dictyostelium discoideum (Social amoeba)).